Reading from the N-terminus, the 260-residue chain is UPF0246 protein Bamb_2261 (260 aa).

It belongs to the UPF0246 family.

The polypeptide is UPF0246 protein Bamb_2261 (Burkholderia ambifaria (strain ATCC BAA-244 / DSM 16087 / CCUG 44356 / LMG 19182 / AMMD) (Burkholderia cepacia (strain AMMD))).